We begin with the raw amino-acid sequence, 118 residues long: Eukaryotic translation initiation factor 4E-binding protein 1 (118 aa).

Serine 2 bears the N-acetylserine mark. A disordered region spans residues 27-48 (VQLPPGDYSTTPGGTLFSTTPG). Polar residues predominate over residues 34–48 (YSTTPGGTLFSTTPG). At threonine 37 the chain carries Phosphothreonine; by MTOR. The residue at position 41 (threonine 41) is a Phosphothreonine. At serine 44 the chain carries Phosphoserine. Threonine 46 bears the Phosphothreonine; by MTOR mark. At threonine 50 the chain carries Phosphothreonine. Tyrosine 54 is subject to Phosphotyrosine. The YXXXXLphi motif motif lies at 54-60 (YDRKFLM). Lysine 57 is covalently cross-linked (Glycyl lysine isopeptide (Lys-Gly) (interchain with G-Cter in ubiquitin)). Residues 64–118 (NSPVTKTPPRDLPTIPGVTSPTGDEPPTEARQNHLRSSPEDKPAGGEESQFEMDI) form a disordered region. Serine 65 is subject to Phosphoserine; by DYRK2, MAPK1, MAPK3 and MTOR. The residue at position 70 (threonine 70) is a Phosphothreonine; by MTOR. Residue threonine 77 is modified to Phosphothreonine. 2 positions are modified to phosphoserine: serine 83 and serine 100. At serine 101 the chain carries Phosphoserine; by DYRK2. The residue at position 112 (serine 112) is a Phosphoserine. A TOS motif motif is present at residues 114–118 (FEMDI).

This sequence belongs to the eIF4E-binding protein family. Hypophosphorylated EIF4EBP1 competes with EIF4G1/EIF4G3 to interact with EIF4E; insulin stimulated MAP-kinase (MAPK1 and MAPK3) or mTORC1 phosphorylation of EIF4EBP1 causes dissociation of the complex allowing EIF4G1/EIF4G3 to bind and consequent initiation of translation. Interacts (via TOS motif) with RPTOR; promoting phosphorylation by mTORC1. In terms of processing, phosphorylated on serine and threonine residues in response to insulin, EGF and PDGF. Phosphorylation at Thr-37, Thr-46, Ser-65 and Thr-70, corresponding to the hyperphosphorylated form, is regulated by mTORC1 and abolishes binding to EIF4E. Post-translationally, ubiquitinated: when eIF4E levels are low, hypophosphorylated form is ubiquitinated by the BCR(KLHL25) complex, leading to its degradation and serving as a homeostatic mechanism to maintain translation and prevent eIF4E inhibition when eIF4E levels are low. Not ubiquitinated when hyperphosphorylated (at Thr-37, Thr-46, Ser-65 and Thr-70) or associated with eIF4E.

It localises to the cytoplasm. The protein resides in the nucleus. Repressor of translation initiation that regulates EIF4E activity by preventing its assembly into the eIF4F complex: hypophosphorylated form competes with EIF4G1/EIF4G3 and strongly binds to EIF4E, leading to repress translation. In contrast, hyperphosphorylated form dissociates from EIF4E, allowing interaction between EIF4G1/EIF4G3 and EIF4E, leading to initiation of translation. Mediates the regulation of protein translation by hormones, growth factors and other stimuli that signal through the MAP kinase and mTORC1 pathways. This Bos taurus (Bovine) protein is Eukaryotic translation initiation factor 4E-binding protein 1 (EIF4EBP1).